The following is a 249-amino-acid chain: MTDQPPPSGSNPTPAPPPPGSSGGYEPSFAPSELGSAYPPPTAPPVGGSYPPPPPPGGSYPPPPPPGGSYPPPPPSTGAYAPPPPGPAIRSLPKEAYTFWVTRVLAYVIDNIPATVLLGIGMLIQTLTKQEACVTDITQYNVNQYCATQPTGIGMLAFWFAWLMATAYLVWNYGYRQGATGSSIGKTVMKFKVISEATGQPIGFGMSVVRQLAHFVDAVICCIGFLFPLWDSKRQTLADKIMTTVCLPI.

Pro residues-rich tracts occupy residues 1–20 (MTDQPPPSGSNPTPAPPPPG) and 38–87 (YPPP…PPGP). The tract at residues 1–87 (MTDQPPPSGS…GAYAPPPPGP (87 aa)) is disordered. A 1-1; approximate repeat occupies 34-43 (LGSAYPPPTA). The segment at 34 to 85 (LGSAYPPPTAPPVGGSYPPPPPPGGSYPPPPPPGGSYPPPPPSTGAYAPPPP) is 5 X 10 AA tandem repeats of [PV]-G-G-S-Y-P-P-P-P-P. A run of 3 repeats spans residues 46-55 (VGGSYPPPPP), 56-65 (PGGSYPPPPP), and 66-75 (PGGSYPPPPP). The stretch at 76–85 (STGAYAPPPP) is one 1-5; approximate repeat. Positions 99–242 (FWVTRVLAYV…KRQTLADKIM (144 aa)) constitute an RDD domain. A run of 2 repeats spans residues 101–123 (VTRVLAYVIDNIPATVLLGIGML) and 134–156 (VTDITQYNVNQYCATQPTGIGML). The segment at 101-156 (VTRVLAYVIDNIPATVLLGIGMLIQTLTKQEACVTDITQYNVNQYCATQPTGIGML) is 2 X 23 AA approximate repeats. Helical transmembrane passes span 104 to 124 (VLAYVIDNIPATVLLGIGMLI), 151 to 171 (TGIGMLAFWFAWLMATAYLVW), and 212 to 232 (LAHFVDAVICCIGFLFPLWDS).

This sequence belongs to the mycobacterial Pra family.

It is found in the cell membrane. The sequence is that of Proline-rich antigen (ag36) from Mycobacterium leprae (strain TN).